The following is a 493-amino-acid chain: N-acetylglucosamine kinase 1 (493 aa).

The Hexokinase domain occupies 27–490; that stretch reads ESSVLSSIVE…SIIGAAIGAA (464 aa). Residues 79-221 form a hexokinase small subdomain region; that stretch reads TGDEHGQYLV…GLTLDVQSIL (143 aa). Positions 222–479 are hexokinase large subdomain; the sequence is NDSLAVYSAG…IKVDLKLIEN (258 aa).

This sequence belongs to the hexokinase family. Interacts with histone deacetylase SIR2 under filamentation-inducing conditions.

The protein localises to the cytoplasm. It localises to the nucleus. Its subcellular location is the mitochondrion. The catalysed reaction is N-acetyl-D-glucosamine + ATP = N-acetyl-D-glucosamine 6-phosphate + ADP + H(+). It carries out the reaction D-mannose + ATP = D-mannose 6-phosphate + ADP + H(+). The enzyme catalyses D-glucose + ATP = D-glucose 6-phosphate + ADP + H(+). It catalyses the reaction D-glucosamine + ATP = D-glucosamine 6-phosphate + ADP + H(+). It functions in the pathway carbohydrate metabolism; hexose metabolism. It participates in carbohydrate degradation; glycolysis; D-glyceraldehyde 3-phosphate and glycerone phosphate from D-glucose: step 1/4. In terms of biological role, component of the N-acetylglucosamine catabolic cascade that phosphorylates N-acetylglucosamine (GlcNAc), and allows the unique ability to utilise GlcNAc as carbon source. Converts GlcNAc to GlcNAc-6-P. Also able to phosphorylate glucose, glucosamine (GlcN), and mannose. Galactose, fructose, N-acetylmannosamine (ManNAc), mannosamine (ManN), galactosamine (GalN), and N-acetylgalactosamine (GalNAc) are not phosphorylated by HXK1. GlcNAc metabolism is closely associated with virulence and morphogenesis, and is involved in the cell wall synthesis. Acts both as a repressor and an activator of genes involved in maintaining cellular homeostasis. Contributes to white-opaque morphological transition and plays a role as a filamentation repressor. The chain is N-acetylglucosamine kinase 1 from Candida albicans (strain SC5314 / ATCC MYA-2876) (Yeast).